Reading from the N-terminus, the 185-residue chain is Shikimate kinase (185 aa).

Residue glycine 21 to threonine 26 coordinates ATP. Threonine 25 provides a ligand contact to Mg(2+). Residues aspartate 43, arginine 67, and glycine 90 each coordinate substrate. ATP is bound at residue arginine 129. Residue arginine 147 participates in substrate binding.

This sequence belongs to the shikimate kinase family. In terms of assembly, monomer. Requires Mg(2+) as cofactor.

Its subcellular location is the cytoplasm. It catalyses the reaction shikimate + ATP = 3-phosphoshikimate + ADP + H(+). It functions in the pathway metabolic intermediate biosynthesis; chorismate biosynthesis; chorismate from D-erythrose 4-phosphate and phosphoenolpyruvate: step 5/7. Catalyzes the specific phosphorylation of the 3-hydroxyl group of shikimic acid using ATP as a cosubstrate. This chain is Shikimate kinase, found in Bacillus pumilus (strain SAFR-032).